The chain runs to 240 residues: 2,3,4,5-tetrahydropyridine-2,6-dicarboxylate N-acetyltransferase (240 aa).

The protein belongs to the transferase hexapeptide repeat family. DapH subfamily.

The enzyme catalyses (S)-2,3,4,5-tetrahydrodipicolinate + acetyl-CoA + H2O = L-2-acetamido-6-oxoheptanedioate + CoA. It participates in amino-acid biosynthesis; L-lysine biosynthesis via DAP pathway; LL-2,6-diaminopimelate from (S)-tetrahydrodipicolinate (acetylase route): step 1/3. Its function is as follows. Catalyzes the transfer of an acetyl group from acetyl-CoA to tetrahydrodipicolinate. This Bacillus thuringiensis (strain Al Hakam) protein is 2,3,4,5-tetrahydropyridine-2,6-dicarboxylate N-acetyltransferase.